Here is a 278-residue protein sequence, read N- to C-terminus: Potassium/proton antiporter CemA (278 aa).

4 helical membrane-spanning segments follow: residues 61 to 81 (VVFL…FLFG), 154 to 174 (CAIT…SILI), 203 to 223 (IILF…EVII), and 238 to 258 (FIFV…KYWI).

It belongs to the CemA family.

The protein localises to the plastid. It localises to the chloroplast inner membrane. The enzyme catalyses K(+)(in) + H(+)(out) = K(+)(out) + H(+)(in). Its function is as follows. Contributes to K(+)/H(+) antiport activity by supporting proton efflux to control proton extrusion and homeostasis in chloroplasts in a light-dependent manner to modulate photosynthesis. Prevents excessive induction of non-photochemical quenching (NPQ) under continuous-light conditions. Indirectly promotes efficient inorganic carbon uptake into chloroplasts. This is Potassium/proton antiporter CemA from Gracilaria tenuistipitata var. liui (Red alga).